Consider the following 142-residue polypeptide: Small ribosomal subunit protein eS6 (142 aa).

Residues 117–142 are disordered; sequence EKPLDELAPKKEKKEGAAGGRAPAKK. Residues 118-132 are compositionally biased toward basic and acidic residues; it reads KPLDELAPKKEKKEG.

The protein belongs to the eukaryotic ribosomal protein eS6 family.

The sequence is that of Small ribosomal subunit protein eS6 from Methanocella arvoryzae (strain DSM 22066 / NBRC 105507 / MRE50).